A 211-amino-acid polypeptide reads, in one-letter code: Transcriptional regulator GfcR (211 aa).

The protein belongs to the purine/pyrimidine phosphoribosyltransferase family. GfcR subfamily.

The chain is Transcriptional regulator GfcR from Methanocaldococcus jannaschii (strain ATCC 43067 / DSM 2661 / JAL-1 / JCM 10045 / NBRC 100440) (Methanococcus jannaschii).